The following is a 404-amino-acid chain: LL-diaminopimelate aminotransferase (404 aa).

Tyr15 and Gly42 together coordinate substrate. Residues Tyr72, 108-109, Tyr132, Asn188, Tyr219, and 247-249 each bind pyridoxal 5'-phosphate; these read AK and SFS. Positions 109, 132, and 188 each coordinate substrate. Position 250 is an N6-(pyridoxal phosphate)lysine (Lys250). The pyridoxal 5'-phosphate site is built by Arg258 and Asn288. Residues Asn288 and Arg384 each contribute to the substrate site.

This sequence belongs to the class-I pyridoxal-phosphate-dependent aminotransferase family. LL-diaminopimelate aminotransferase subfamily. As to quaternary structure, homodimer. Pyridoxal 5'-phosphate is required as a cofactor.

The enzyme catalyses (2S,6S)-2,6-diaminopimelate + 2-oxoglutarate = (S)-2,3,4,5-tetrahydrodipicolinate + L-glutamate + H2O + H(+). It functions in the pathway amino-acid biosynthesis; L-lysine biosynthesis via DAP pathway; LL-2,6-diaminopimelate from (S)-tetrahydrodipicolinate (aminotransferase route): step 1/1. Its function is as follows. Involved in the synthesis of meso-diaminopimelate (m-DAP or DL-DAP), required for both lysine and peptidoglycan biosynthesis. Catalyzes the direct conversion of tetrahydrodipicolinate to LL-diaminopimelate. The sequence is that of LL-diaminopimelate aminotransferase from Lachnospira eligens (strain ATCC 27750 / DSM 3376 / VPI C15-48 / C15-B4) (Eubacterium eligens).